We begin with the raw amino-acid sequence, 465 residues long: UDP-N-acetylmuramate--L-alanine ligase (465 aa).

Residue 112–118 participates in ATP binding; sequence GTHGKTT.

Belongs to the MurCDEF family.

It localises to the cytoplasm. It catalyses the reaction UDP-N-acetyl-alpha-D-muramate + L-alanine + ATP = UDP-N-acetyl-alpha-D-muramoyl-L-alanine + ADP + phosphate + H(+). The protein operates within cell wall biogenesis; peptidoglycan biosynthesis. Cell wall formation. The protein is UDP-N-acetylmuramate--L-alanine ligase of Burkholderia cenocepacia (strain ATCC BAA-245 / DSM 16553 / LMG 16656 / NCTC 13227 / J2315 / CF5610) (Burkholderia cepacia (strain J2315)).